The following is a 1024-amino-acid chain: Error-prone DNA polymerase (1024 aa).

The protein belongs to the DNA polymerase type-C family. DnaE2 subfamily.

It localises to the cytoplasm. The enzyme catalyses DNA(n) + a 2'-deoxyribonucleoside 5'-triphosphate = DNA(n+1) + diphosphate. In terms of biological role, DNA polymerase involved in damage-induced mutagenesis and translesion synthesis (TLS). It is not the major replicative DNA polymerase. This is Error-prone DNA polymerase from Pseudomonas paraeruginosa (strain DSM 24068 / PA7) (Pseudomonas aeruginosa (strain PA7)).